A 443-amino-acid polypeptide reads, in one-letter code: Probable protein S-acyltransferase 7 (443 aa).

2 helical membrane passes run serine 44–alanine 64 and glycine 76–leucine 96. The DHHC domain occupies lysine 149–phenylalanine 199. Cysteine 179 functions as the S-palmitoyl cysteine intermediate in the catalytic mechanism. 2 helical membrane passes run phenylalanine 193–tryptophan 213 and serine 237–phenylalanine 257. Residues serine 327 and serine 377 each carry the phosphoserine modification. Positions alanine 382 to serine 392 are enriched in basic and acidic residues. Residues alanine 382–threonine 443 are disordered. Position 406 is a phosphoserine (serine 406).

The protein belongs to the DHHC palmitoyltransferase family.

It localises to the cell membrane. The enzyme catalyses L-cysteinyl-[protein] + hexadecanoyl-CoA = S-hexadecanoyl-L-cysteinyl-[protein] + CoA. Its function is as follows. Palmitoyl acyltransferase. The protein is Probable protein S-acyltransferase 7 (PAT07) of Arabidopsis thaliana (Mouse-ear cress).